A 372-amino-acid polypeptide reads, in one-letter code: 4-hydroxy-3-methylbut-2-en-1-yl diphosphate synthase (flavodoxin) (372 aa).

[4Fe-4S] cluster contacts are provided by C270, C273, C305, and E312.

It belongs to the IspG family. Requires [4Fe-4S] cluster as cofactor.

The enzyme catalyses (2E)-4-hydroxy-3-methylbut-2-enyl diphosphate + oxidized [flavodoxin] + H2O + 2 H(+) = 2-C-methyl-D-erythritol 2,4-cyclic diphosphate + reduced [flavodoxin]. Its pathway is isoprenoid biosynthesis; isopentenyl diphosphate biosynthesis via DXP pathway; isopentenyl diphosphate from 1-deoxy-D-xylulose 5-phosphate: step 5/6. Its function is as follows. Converts 2C-methyl-D-erythritol 2,4-cyclodiphosphate (ME-2,4cPP) into 1-hydroxy-2-methyl-2-(E)-butenyl 4-diphosphate. This is 4-hydroxy-3-methylbut-2-en-1-yl diphosphate synthase (flavodoxin) from Salmonella gallinarum (strain 287/91 / NCTC 13346).